The sequence spans 91 residues: PqqA binding protein (91 aa).

It belongs to the PqqD family. As to quaternary structure, monomer. Interacts with PqqE.

The protein operates within cofactor biosynthesis; pyrroloquinoline quinone biosynthesis. Functionally, functions as a PqqA binding protein and presents PqqA to PqqE, in the pyrroloquinoline quinone (PQQ) biosynthetic pathway. The protein is PqqA binding protein of Pseudomonas fluorescens (strain SBW25).